A 456-amino-acid polypeptide reads, in one-letter code: MTLTALNAISPIDGRYVNKTRALSPYFSEFALTYYRLMVEIKWFESLAANDTIPEVPALDNKARKFLSDLISNFNESEAEKIKEFEKQTNHDVKAVEYYLKDKFQENEQLKSCVAFIHFACTSEDINNLAYALMIKQAIAQVIQPTIAEIMGSITLLGKQHADVAMLSRTHGQPATPTTMGKELVNFVARLKRPQQQLAEVLIPAKFNGAVGNYNAHVAAYPEVDWRKHCANFVTSLGLSFNAYTTQIEPHDGIAEVSQIMVRINNILLDYTQDIWSYISLGYFKQKTIAEEVGSSTMPHKVNPIDFENAEGNLGLSNALFIHFANKLTQSRMQRDLSDSTVLRNLGVAFSYSLIAYHSVAKGNDKLQINKSALQKDLSENWEVLAEAIQTVMRRYNEPNAYEQLKELTRGQMIDAENLKKFIKTLSIPEEAKAELMKLTPETYTGLATQLVKAFS.

Residues 15–16, 90–92, and 122–123 contribute to the N(6)-(1,2-dicarboxyethyl)-AMP site; these read RY, NHD, and TS. The active-site Proton donor/acceptor is His171. Gln247 provides a ligand contact to N(6)-(1,2-dicarboxyethyl)-AMP. Catalysis depends on Ser295, which acts as the Proton donor/acceptor. Residues Ser296, 301 to 303, Asn309, Arg335, and 340 to 344 contribute to the N(6)-(1,2-dicarboxyethyl)-AMP site; these read KVN and STVLR.

This sequence belongs to the lyase 1 family. Adenylosuccinate lyase subfamily. As to quaternary structure, homotetramer. Residues from neighboring subunits contribute catalytic and substrate-binding residues to each active site.

It carries out the reaction N(6)-(1,2-dicarboxyethyl)-AMP = fumarate + AMP. The enzyme catalyses (2S)-2-[5-amino-1-(5-phospho-beta-D-ribosyl)imidazole-4-carboxamido]succinate = 5-amino-1-(5-phospho-beta-D-ribosyl)imidazole-4-carboxamide + fumarate. It participates in purine metabolism; AMP biosynthesis via de novo pathway; AMP from IMP: step 2/2. It functions in the pathway purine metabolism; IMP biosynthesis via de novo pathway; 5-amino-1-(5-phospho-D-ribosyl)imidazole-4-carboxamide from 5-amino-1-(5-phospho-D-ribosyl)imidazole-4-carboxylate: step 2/2. Catalyzes two reactions in de novo purine nucleotide biosynthesis. Catalyzes the breakdown of 5-aminoimidazole- (N-succinylocarboxamide) ribotide (SAICAR or 2-[5-amino-1-(5-phospho-beta-D-ribosyl)imidazole-4-carboxamido]succinate) to 5-aminoimidazole-4-carboxamide ribotide (AICAR or 5-amino-1-(5-phospho-beta-D-ribosyl)imidazole-4-carboxamide) and fumarate, and of adenylosuccinate (ADS or N(6)-(1,2-dicarboxyethyl)-AMP) to adenosine monophosphate (AMP) and fumarate. In Legionella pneumophila (strain Corby), this protein is Adenylosuccinate lyase (purB).